A 531-amino-acid polypeptide reads, in one-letter code: Beta-hexosaminidase subunit beta (531 aa).

The N-terminal stretch at 1–21 (MEVLPGLLRLLAALVVAERWA) is a signal peptide. Cys-67 and Cys-111 are oxidised to a cystine. 3 N-linked (GlcNAc...) asparagine glycosylation sites follow: Asn-120, Asn-164, and Asn-301. Cystine bridges form between Cys-283–Cys-334 and Cys-508–Cys-525. Catalysis depends on Glu-329, which acts as the Proton donor.

The protein belongs to the glycosyl hydrolase 20 family. There are 3 forms of beta-hexosaminidase: hexosaminidase A is a heterodimer composed of one subunit alpha and one subunit beta (chain A and B); hexosaminidase B is a homodimer of two beta subunits (two chains A and B); hexosaminidase S is a homodimer of two alpha subunits. The composition of the dimer (isozyme A versus isozyme S) has a significant effect on the substrate specificity of the alpha subunit active site.

It localises to the lysosome. It is found in the cytoplasmic vesicle. Its subcellular location is the secretory vesicle. The protein resides in the cortical granule. It catalyses the reaction Hydrolysis of terminal non-reducing N-acetyl-D-hexosamine residues in N-acetyl-beta-D-hexosaminides.. It carries out the reaction N-acetyl-beta-D-galactosaminyl-(1-&gt;4)-beta-D-3-sulfogalactosyl-(1-&gt;4)-beta-D-glucosyl-(1&lt;-&gt;1')-ceramide + H2O = a beta-D-3-sulfogalactosyl-(1-&gt;4)-beta-D-glucosyl-(1&lt;-&gt;1')-ceramide + N-acetyl-beta-D-galactosamine. The enzyme catalyses a ganglioside GM2 (d18:1(4E)) + H2O = a ganglioside GM3 (d18:1(4E)) + N-acetyl-beta-D-galactosamine. The catalysed reaction is a ganglioside GM2 + H2O = a ganglioside GM3 + N-acetyl-beta-D-galactosamine. It catalyses the reaction beta-D-GalNAc-(1-&gt;4)-alpha-L-IdoA-(1-&gt;3)-beta-D-GalNAc-4-sulfate-(1-&gt;4)-alpha-L-IdoA-(1-&gt;3)-D-GalNAc-4-sulfate + H2O = alpha-L-IdoA-(1-&gt;3)-beta-D-GalNAc-4-sulfate-(1-&gt;4)-alpha-L-IdoA-(1-&gt;3)-D-GalNAc-4-sulfate + N-acetyl-D-galactosamine. It carries out the reaction N-acetyl-beta-D-6-sulfogalactosaminyl-(1-&gt;4)-alpha-L-iduronyl-(1-&gt;3)-N-acetyl-D-6-sulfogalactosamine + H2O = alpha-L-iduronyl-(1-&gt;3)-N-acetyl-D-6-sulfogalactosamine + N-acetyl-D-6-sulfogalactosamine. Addition of GM2A stimulates the hydrolysis of sulfated glycosphingolipid SM2 and the ganglioside GM2. Functionally, hydrolyzes the non-reducing end N-acetyl-D-hexosamine and/or sulfated N-acetyl-D-hexosamine of glycoconjugates, such as the oligosaccharide moieties from proteins and neutral glycolipids, or from certain mucopolysaccharides. The isozyme B does not hydrolyze each of these substrates, however hydrolyzes efficiently neutral oligosaccharide. Only the isozyme A is responsible for the degradation of GM2 gangliosides in the presence of GM2A. During fertilization is responsible, at least in part, for the zona block to polyspermy. Present in the cortical granules of non-activated oocytes, is exocytosed during the cortical reaction in response to oocyte activation and inactivates the sperm galactosyltransferase-binding site, accounting for the block in sperm binding to the zona pellucida. The chain is Beta-hexosaminidase subunit beta from Sus scrofa (Pig).